A 189-amino-acid chain; its full sequence is Potassium-transporting ATPase KdpC subunit (189 aa).

The helical transmembrane segment at 11 to 31 (LFVLLTVITGVLYPVFVTGLA) threads the bilayer.

This sequence belongs to the KdpC family. In terms of assembly, the system is composed of three essential subunits: KdpA, KdpB and KdpC.

Its subcellular location is the cell inner membrane. Its function is as follows. Part of the high-affinity ATP-driven potassium transport (or Kdp) system, which catalyzes the hydrolysis of ATP coupled with the electrogenic transport of potassium into the cytoplasm. This subunit acts as a catalytic chaperone that increases the ATP-binding affinity of the ATP-hydrolyzing subunit KdpB by the formation of a transient KdpB/KdpC/ATP ternary complex. In Polynucleobacter asymbioticus (strain DSM 18221 / CIP 109841 / QLW-P1DMWA-1) (Polynucleobacter necessarius subsp. asymbioticus), this protein is Potassium-transporting ATPase KdpC subunit.